Reading from the N-terminus, the 124-residue chain is Quinol oxidase subunit 4 (124 aa).

3 consecutive transmembrane segments (helical) span residues 16–36 (IVGFALSIVLTLLALWVAVYT), 44–64 (LWIIFGFAFIQAALQLLMFMH), and 78–98 (TLFGFFGAIVIVLGSIWIFAA).

The protein belongs to the cytochrome c oxidase bacterial subunit 4 family.

It localises to the cell membrane. The catalysed reaction is 2 a quinol + O2 = 2 a quinone + 2 H2O. Catalyzes quinol oxidation with the concomitant reduction of oxygen to water. Major component for energy conversion during vegetative growth. In Bacillus spizizenii (strain ATCC 23059 / NRRL B-14472 / W23) (Bacillus subtilis subsp. spizizenii), this protein is Quinol oxidase subunit 4 (qoxD).